Here is a 222-residue protein sequence, read N- to C-terminus: Probable GTP-binding protein EngB (222 aa).

The region spanning 25-199 is the EngB-type G domain; sequence AGVEVAFAGR…SQLLQNWFDT (175 aa). Residues 33–40, 60–64, 78–81, 145–148, and 178–180 contribute to the GTP site; these read GRSNAGKS, GRTQH, DLPG, TKAD, and FSS. Residues Ser-40 and Thr-62 each contribute to the Mg(2+) site.

The protein belongs to the TRAFAC class TrmE-Era-EngA-EngB-Septin-like GTPase superfamily. EngB GTPase family. Requires Mg(2+) as cofactor.

In terms of biological role, necessary for normal cell division and for the maintenance of normal septation. This chain is Probable GTP-binding protein EngB, found in Nitrosomonas europaea (strain ATCC 19718 / CIP 103999 / KCTC 2705 / NBRC 14298).